Consider the following 145-residue polypeptide: 3-hydroxyacyl-[acyl-carrier-protein] dehydratase FabZ (145 aa).

Residue H47 is part of the active site.

This sequence belongs to the thioester dehydratase family. FabZ subfamily.

Its subcellular location is the cytoplasm. The enzyme catalyses a (3R)-hydroxyacyl-[ACP] = a (2E)-enoyl-[ACP] + H2O. Involved in unsaturated fatty acids biosynthesis. Catalyzes the dehydration of short chain beta-hydroxyacyl-ACPs and long chain saturated and unsaturated beta-hydroxyacyl-ACPs. The sequence is that of 3-hydroxyacyl-[acyl-carrier-protein] dehydratase FabZ from Ruthia magnifica subsp. Calyptogena magnifica.